Reading from the N-terminus, the 302-residue chain is tRNA dimethylallyltransferase (302 aa).

12 to 19 provides a ligand contact to ATP; it reads GPTASGKS. 14–19 provides a ligand contact to substrate; it reads TASGKS. The interaction with substrate tRNA stretch occupies residues 37–40; it reads DSMQ.

Belongs to the IPP transferase family. In terms of assembly, monomer. Requires Mg(2+) as cofactor.

It carries out the reaction adenosine(37) in tRNA + dimethylallyl diphosphate = N(6)-dimethylallyladenosine(37) in tRNA + diphosphate. In terms of biological role, catalyzes the transfer of a dimethylallyl group onto the adenine at position 37 in tRNAs that read codons beginning with uridine, leading to the formation of N6-(dimethylallyl)adenosine (i(6)A). The chain is tRNA dimethylallyltransferase from Corynebacterium diphtheriae (strain ATCC 700971 / NCTC 13129 / Biotype gravis).